The following is a 467-amino-acid chain: MKEYPSVTVIGAGLAGSEAAWQIASAGIKVTLFEMRPKKKSPAHHSSEFAELVCSNSFGALSSDRAAGLLQEELRTLKSIVINKADKHSVPAGGALAVDRSQFSLSITNELSSHPLITIIRDECPSLPKTQQITILATGPLTSELLAEDIKEFTGEKECHFFDAASPIITGESIDFSTAFRASRYDKGDADYVNCPMNEDSYIKFHSELIKAEQAKLKDFEKESAHFFEGCLPIEQLAKRGIDTMRYGPLKPIGLWDPRWGDVNDKNIRRLKRAHAVVQLRQEDKAGQLWNLVGFQTNLKWGEQKRIFRMIPGLSKAEFIRFGVMHRNTYLESPKLIEPTLQFINRKTLFAAGQLTGTEGYAAAIAGGWLAGTNAALLAKGLDTITLPSSTMIGALTNFVSNSQASLRVKNKKNFQPMPANFGLLPELDNRVHNKRERYKEYRDRALGQIKKLRETLLDKSSYPTTI.

An FAD-binding site is contributed by 11–16 (GAGLAG).

Belongs to the MnmG family. TrmFO subfamily. The cofactor is FAD.

The protein resides in the cytoplasm. The catalysed reaction is uridine(54) in tRNA + (6R)-5,10-methylene-5,6,7,8-tetrahydrofolate + NADH + H(+) = 5-methyluridine(54) in tRNA + (6S)-5,6,7,8-tetrahydrofolate + NAD(+). It carries out the reaction uridine(54) in tRNA + (6R)-5,10-methylene-5,6,7,8-tetrahydrofolate + NADPH + H(+) = 5-methyluridine(54) in tRNA + (6S)-5,6,7,8-tetrahydrofolate + NADP(+). Catalyzes the folate-dependent formation of 5-methyl-uridine at position 54 (M-5-U54) in all tRNAs. The sequence is that of Methylenetetrahydrofolate--tRNA-(uracil-5-)-methyltransferase TrmFO from Prochlorococcus marinus (strain NATL1A).